A 189-amino-acid chain; its full sequence is Bilin-binding protein (189 aa).

An N-terminal signal peptide occupies residues 1–15 (MQYLIVLALVAAASA). 2 cysteine pairs are disulfide-bonded: Cys-23–Cys-130 and Cys-57–Cys-185.

This sequence belongs to the calycin superfamily. Lipocalin family. As to quaternary structure, homotetramer. As to expression, hemolymph.

The protein localises to the secreted. Functionally, this protein binds the blue pigments bilins. The protein is Bilin-binding protein of Pieris brassicae (White butterfly).